We begin with the raw amino-acid sequence, 114 residues long: Small ribosomal subunit protein eS25 (114 aa).

The segment at Met-1 to Lys-33 is disordered. Basic residues predominate over residues Gly-20–Gly-30.

Belongs to the eukaryotic ribosomal protein eS25 family.

The polypeptide is Small ribosomal subunit protein eS25 (RPS25) (Amaranthus cruentus (Purple amaranth)).